We begin with the raw amino-acid sequence, 199 residues long: Probable chemoreceptor glutamine deamidase CheD (199 aa).

Belongs to the CheD family.

The catalysed reaction is L-glutaminyl-[protein] + H2O = L-glutamyl-[protein] + NH4(+). Functionally, probably deamidates glutamine residues to glutamate on methyl-accepting chemotaxis receptors (MCPs), playing an important role in chemotaxis. This is Probable chemoreceptor glutamine deamidase CheD from Cereibacter sphaeroides (strain ATCC 17023 / DSM 158 / JCM 6121 / CCUG 31486 / LMG 2827 / NBRC 12203 / NCIMB 8253 / ATH 2.4.1.) (Rhodobacter sphaeroides).